The sequence spans 426 residues: Glucose-1-phosphate adenylyltransferase (426 aa).

Residues tyrosine 100, glycine 165, 180–181 (EK), and serine 191 each bind alpha-D-glucose 1-phosphate.

Belongs to the bacterial/plant glucose-1-phosphate adenylyltransferase family. In terms of assembly, homotetramer.

The enzyme catalyses alpha-D-glucose 1-phosphate + ATP + H(+) = ADP-alpha-D-glucose + diphosphate. It functions in the pathway glycan biosynthesis; glycogen biosynthesis. In terms of biological role, involved in the biosynthesis of ADP-glucose, a building block required for the elongation reactions to produce glycogen. Catalyzes the reaction between ATP and alpha-D-glucose 1-phosphate (G1P) to produce pyrophosphate and ADP-Glc. In Acetivibrio thermocellus (strain ATCC 27405 / DSM 1237 / JCM 9322 / NBRC 103400 / NCIMB 10682 / NRRL B-4536 / VPI 7372) (Clostridium thermocellum), this protein is Glucose-1-phosphate adenylyltransferase.